The sequence spans 466 residues: Na(+)/H(+) antiporter NhaA (466 aa).

11 helical membrane passes run 32-52 (VGGV…NVPA), 74-94 (LSVQ…VAGI), 111-131 (AALP…VYTL), 142-162 (GWAV…AVIG), 172-192 (FLLT…AVFF), 195-215 (DLNF…WLLL), 221-241 (GWYV…NSGI), 280-300 (GLAV…GGAL), 310-330 (LGVV…GTWL), 348-368 (VFAV…IGEL), and 379-399 (EVKA…TTLL).

Belongs to the NhaA Na(+)/H(+) (TC 2.A.33) antiporter family.

The protein localises to the cell membrane. The enzyme catalyses Na(+)(in) + 2 H(+)(out) = Na(+)(out) + 2 H(+)(in). Functionally, na(+)/H(+) antiporter that extrudes sodium in exchange for external protons. The sequence is that of Na(+)/H(+) antiporter NhaA from Streptomyces avermitilis (strain ATCC 31267 / DSM 46492 / JCM 5070 / NBRC 14893 / NCIMB 12804 / NRRL 8165 / MA-4680).